The chain runs to 90 residues: Potassium channel toxin BmTXK-beta (90 aa).

The first 22 residues, 1-22, serve as a signal peptide directing secretion; sequence MMKQQFFLFLAVIVMISSVIEA. The propeptide occupies 23–29; that stretch reads GRGKEIM. One can recognise a BetaSPN-type CS-alpha/beta domain in the interval 55–90; the sequence is EYACPVIEKWCEDHCAAKKAIGKCEDTECKCLKLRK. 3 disulfides stabilise this stretch: Cys58-Cys78, Cys65-Cys83, and Cys69-Cys85.

The protein belongs to the long chain scorpion toxin family. Class 2 subfamily. As to expression, expressed by the venom gland.

The protein localises to the secreted. Functionally, this recombinant peptide reversibly and dose-dependently inhibits the transient outward potassium current (I(To)) of rabbit atrial myocyte and prolongs the action potential duration of rabbit atrial myocyte without affecting the action potential amplitude. Thus, the voltage-gated potassium channels Kv4.1/KCND1, Kv4.2/KCND2, Kv4.3/KCND3 may be the target of this toxin. The protein is Potassium channel toxin BmTXK-beta of Olivierus martensii (Manchurian scorpion).